The sequence spans 605 residues: Pescadillo homolog (605 aa).

Residues 51 to 484 (KANKGSTAPT…GEEEESESES (434 aa)) are sufficient for interaction with ERB1. Serine 288 carries the phosphoserine modification. The stretch at 294-342 (LKSALNADEANTDETEKEEEQEKKQEKEQEKEQNEETELDTFEDNNKNK) forms a coiled coil. A disordered region spans residues 297–342 (ALNADEANTDETEKEEEQEKKQEKEQEKEQNEETELDTFEDNNKNK). Residues 303-312 (ANTDETEKEE) are compositionally biased toward acidic residues. Phosphothreonine is present on threonine 308. The segment covering 313–327 (EQEKKQEKEQEKEQN) has biased composition (basic and acidic residues). In terms of domain architecture, BRCT spans 355–449 (PVASLFSAFV…ELVPANKYLP (95 aa)). A disordered region spans residues 459–605 (PWGDAIGYDP…AKLNKLDSKK (147 aa)). Acidic residues predominate over residues 473–510 (EEGEEEESESESESEDQVEEEDQEVVAGEEDDDDDEEL). Positions 530-605 (EADKDVNKSK…AKLNKLDSKK (76 aa)) form a coiled coil. The span at 562–571 (KQKKLYKKMK) shows a compositional bias: basic residues. Residues 575–584 (AKKEEQAENL) are compositionally biased toward basic and acidic residues. Residues 585-598 (KKKKKQIAKQKAKL) show a composition bias toward basic residues.

It belongs to the pescadillo family. Component of the NOP7 complex, composed of ERB1, NOP7 and YTM1. The complex is held together by ERB1, which interacts with NOP7 via its N-terminal domain and with YTM1 via a high-affinity interaction between the seven-bladed beta-propeller domains of the 2 proteins. The NOP7 complex associates with the 66S pre-ribosome.

It is found in the nucleus. The protein resides in the nucleolus. It localises to the nucleoplasm. Its function is as follows. Component of the NOP7 complex, which is required for maturation of the 25S and 5.8S ribosomal RNAs and formation of the 60S ribosome. The polypeptide is Pescadillo homolog (Saccharomyces cerevisiae (strain YJM789) (Baker's yeast)).